We begin with the raw amino-acid sequence, 456 residues long: Methylenetetrahydrofolate--tRNA-(uracil-5-)-methyltransferase TrmFO (456 aa).

Residue 9 to 14 participates in FAD binding; it reads GGGMAG.

It belongs to the MnmG family. TrmFO subfamily. FAD serves as cofactor.

Its subcellular location is the cytoplasm. The catalysed reaction is uridine(54) in tRNA + (6R)-5,10-methylene-5,6,7,8-tetrahydrofolate + NADH + H(+) = 5-methyluridine(54) in tRNA + (6S)-5,6,7,8-tetrahydrofolate + NAD(+). It catalyses the reaction uridine(54) in tRNA + (6R)-5,10-methylene-5,6,7,8-tetrahydrofolate + NADPH + H(+) = 5-methyluridine(54) in tRNA + (6S)-5,6,7,8-tetrahydrofolate + NADP(+). Catalyzes the folate-dependent formation of 5-methyl-uridine at position 54 (M-5-U54) in all tRNAs. In Novosphingobium aromaticivorans (strain ATCC 700278 / DSM 12444 / CCUG 56034 / CIP 105152 / NBRC 16084 / F199), this protein is Methylenetetrahydrofolate--tRNA-(uracil-5-)-methyltransferase TrmFO.